An 88-amino-acid chain; its full sequence is Probable Fe(2+)-trafficking protein (88 aa).

It belongs to the Fe(2+)-trafficking protein family.

Functionally, could be a mediator in iron transactions between iron acquisition and iron-requiring processes, such as synthesis and/or repair of Fe-S clusters in biosynthetic enzymes. In Alkalilimnicola ehrlichii (strain ATCC BAA-1101 / DSM 17681 / MLHE-1), this protein is Probable Fe(2+)-trafficking protein.